A 322-amino-acid chain; its full sequence is Beta-1,3-galactosyltransferase bre-5 (322 aa).

The Cytoplasmic portion of the chain corresponds to 1–16 (MFLCVRILKRKYHELS). Residues 17–37 (SFQKLLIFTITIFLLWVLGVV) traverse the membrane as a helical; Signal-anchor for type II membrane protein segment. At 38-322 (DKFRETSFGD…YEYSQLNGFE (285 aa)) the chain is on the lumenal side. N-linked (GlcNAc...) asparagine glycosylation occurs at Asn-150.

It belongs to the glycosyltransferase 31 family. In terms of tissue distribution, expressed in the gut.

The protein resides in the golgi apparatus membrane. The protein operates within protein modification; protein glycosylation. In terms of biological role, transfers N-acetylgalactosamine onto mannose groups of carbohydrate substrates. Required for susceptibility to pore-forming crystal toxins in conjunction with bre-1, bre-2, bre-3, and bre-4. Involved in resistance to the nematotoxic C.cinerea galectin Cgl2. In Caenorhabditis elegans, this protein is Beta-1,3-galactosyltransferase bre-5.